Reading from the N-terminus, the 618-residue chain is Proline--tRNA ligase (618 aa).

This sequence belongs to the class-II aminoacyl-tRNA synthetase family. ProS type 1 subfamily. As to quaternary structure, homodimer.

It localises to the cytoplasm. The enzyme catalyses tRNA(Pro) + L-proline + ATP = L-prolyl-tRNA(Pro) + AMP + diphosphate. Its function is as follows. Catalyzes the attachment of proline to tRNA(Pro) in a two-step reaction: proline is first activated by ATP to form Pro-AMP and then transferred to the acceptor end of tRNA(Pro). As ProRS can inadvertently accommodate and process non-cognate amino acids such as alanine and cysteine, to avoid such errors it has two additional distinct editing activities against alanine. One activity is designated as 'pretransfer' editing and involves the tRNA(Pro)-independent hydrolysis of activated Ala-AMP. The other activity is designated 'posttransfer' editing and involves deacylation of mischarged Ala-tRNA(Pro). The misacylated Cys-tRNA(Pro) is not edited by ProRS. The protein is Proline--tRNA ligase of Streptococcus pyogenes serotype M1.